We begin with the raw amino-acid sequence, 518 residues long: Probable inorganic carbon transporter subunit DabB (518 aa).

Helical transmembrane passes span 3-23 (MQWV…LGSL), 37-57 (ISLL…FEWV), 65-85 (WVGV…IAFV), 114-134 (CVVT…WIAI), 165-185 (AEAC…TWFI), 207-227 (MLLA…GWLI), 242-262 (AGII…IVLS), 264-284 (MAQW…ALVM), 302-322 (MGLM…LHLV), 358-378 (WWFA…LADL), 379-399 (SGPY…IAER), 403-423 (LTSS…VVYT), and 442-462 (WKGD…YFLL).

It belongs to the inorganic carbon transporter (TC 9.A.2) DabB family. As to quaternary structure, forms a complex with DabA.

Its subcellular location is the cell inner membrane. Intracellular DIC accumulation is sensitive to CCCP (carbonyl cyanide-m-chlorophenylhydrazone) and DCCD (N,N-dicyclohexylcarbodiimide) and therefore likely driven by either proton gradient, ATP, or both. Part of an energy-coupled inorganic carbon pump involved in transport of dissolved inorganic carbon (DIC) with downstream gene dabA (Tcr_0854); has been suggested to be a proton-DIC symporter. The chain is Probable inorganic carbon transporter subunit DabB from Hydrogenovibrio crunogenus (strain DSM 25203 / XCL-2) (Thiomicrospira crunogena).